A 393-amino-acid chain; its full sequence is MLTIGTALRPNATRVMLLGSGELGKEVAIECQRLGLEVIAVDRYADAPAMHVAHRSHVINMLDGAALKRLVAQEKPHYIVPEIEAIATDMLVELENMGQKVVPCAQATRLTMNREGIRLLAAETLQLPTSSYRFADTESAFRQAVSEIGYPCIVKPVMSSSGKGQSLIRSEPQLQAAWDYAQQGGRAGSGKVIVEGLVHFDFEITLLTISAVDGIHFCAPIGHRQEDGDYRESWQPQAMSDVAVARAKEIASQVVKALGGYGLFGVELFVCGDEVIFSEVSPRPHDTGMVTLISQNMSEFALHVRAFLGLPIGTIRQYGAAASAVILPELTSHNIAYHGLETALVGDTQIRLFGKPDIAGKRRLGVALAVADDTDTAIEIAKRAASAVVVTGK.

Residues 22–23 and Glu-82 each bind N(1)-(5-phospho-beta-D-ribosyl)glycinamide; that span reads EL. ATP contacts are provided by residues Arg-114, Lys-155, 160 to 165, 195 to 198, and Glu-203; these read SSGKGQ and EGLV. Residues 119-308 form the ATP-grasp domain; sequence LLAAETLQLP…EFALHVRAFL (190 aa). Glu-267 and Glu-279 together coordinate Mg(2+). N(1)-(5-phospho-beta-D-ribosyl)glycinamide is bound by residues Asp-286, Lys-355, and 362-363; that span reads RR.

Belongs to the PurK/PurT family. As to quaternary structure, homodimer.

The enzyme catalyses N(1)-(5-phospho-beta-D-ribosyl)glycinamide + formate + ATP = N(2)-formyl-N(1)-(5-phospho-beta-D-ribosyl)glycinamide + ADP + phosphate + H(+). Its pathway is purine metabolism; IMP biosynthesis via de novo pathway; N(2)-formyl-N(1)-(5-phospho-D-ribosyl)glycinamide from N(1)-(5-phospho-D-ribosyl)glycinamide (formate route): step 1/1. Its function is as follows. Involved in the de novo purine biosynthesis. Catalyzes the transfer of formate to 5-phospho-ribosyl-glycinamide (GAR), producing 5-phospho-ribosyl-N-formylglycinamide (FGAR). Formate is provided by PurU via hydrolysis of 10-formyl-tetrahydrofolate. This Yersinia enterocolitica serotype O:8 / biotype 1B (strain NCTC 13174 / 8081) protein is Formate-dependent phosphoribosylglycinamide formyltransferase.